The sequence spans 694 residues: Elongation factor G (694 aa).

A tr-type G domain is found at 8–287 (EDYRNFGIMA…AVVEFLPAPT (280 aa)). GTP is bound by residues 17 to 24 (AHIDAGKT), 86 to 90 (DTPGH), and 140 to 143 (NKMD).

Belongs to the TRAFAC class translation factor GTPase superfamily. Classic translation factor GTPase family. EF-G/EF-2 subfamily.

The protein localises to the cytoplasm. Catalyzes the GTP-dependent ribosomal translocation step during translation elongation. During this step, the ribosome changes from the pre-translocational (PRE) to the post-translocational (POST) state as the newly formed A-site-bound peptidyl-tRNA and P-site-bound deacylated tRNA move to the P and E sites, respectively. Catalyzes the coordinated movement of the two tRNA molecules, the mRNA and conformational changes in the ribosome. This is Elongation factor G from Brucella abortus (strain S19).